The sequence spans 262 residues: Hydroxyethylthiazole kinase (262 aa).

Methionine 50 contacts substrate. Arginine 125 and threonine 171 together coordinate ATP. Residue glycine 198 participates in substrate binding.

This sequence belongs to the Thz kinase family. Mg(2+) serves as cofactor.

It catalyses the reaction 5-(2-hydroxyethyl)-4-methylthiazole + ATP = 4-methyl-5-(2-phosphooxyethyl)-thiazole + ADP + H(+). The protein operates within cofactor biosynthesis; thiamine diphosphate biosynthesis; 4-methyl-5-(2-phosphoethyl)-thiazole from 5-(2-hydroxyethyl)-4-methylthiazole: step 1/1. Its function is as follows. Catalyzes the phosphorylation of the hydroxyl group of 4-methyl-5-beta-hydroxyethylthiazole (THZ). In Escherichia coli (strain SMS-3-5 / SECEC), this protein is Hydroxyethylthiazole kinase.